The primary structure comprises 846 residues: Putative transcriptional regulator tpeD (846 aa).

The BED-type; degenerate zinc-finger motif lies at 104 to 166; sequence KHQSECWQHF…NCRKSVPVSK (63 aa). The interval 734-846 is disordered; it reads RAREERDAQQ…RDEDFVYETP (113 aa). Over residues 756 to 769 the composition is skewed to acidic residues; that stretch reads PISDSEEAESEDES. Positions 773–786 are enriched in low complexity; it reads PQSPQASQARSQRS. Residues 797–809 are compositionally biased toward acidic residues; the sequence is PLIELDGNEEDEV.

It is found in the nucleus. Its function is as follows. Putative transcriptional regulator; part of the gene cluster that mediates the biosynthesis of polyesters containing 2,4-dihydroxy-6-(2-hydroxypropyl)benzoate and 3-hydroxybutyrate moieties, such as talapolyester G, 15G256beta and 15G256beta-2; as well as to oxidized derivatives such as 15G256alpha. In Talaromyces stipitatus (strain ATCC 10500 / CBS 375.48 / QM 6759 / NRRL 1006) (Penicillium stipitatum), this protein is Putative transcriptional regulator tpeD.